A 96-amino-acid polypeptide reads, in one-letter code: ASNSD1 upstream open reading frame protein (96 aa).

Residues 1–10 (MPSRGTRPED) show a composition bias toward basic and acidic residues. Positions 1–28 (MPSRGTRPEDSSVLIPTDNSTPHKEDLS) are disordered. Residues 23–96 (HKEDLSSKIK…ENLDKTKIKK (74 aa)) adopt a coiled-coil conformation.

In terms of assembly, component of the PAQosome complex which is responsible for the biogenesis of several protein complexes and which consists of R2TP complex members RUVBL1, RUVBL2, RPAP3 and PIH1D1, URI complex members PFDN2, PFDN6, PDRG1, UXT and URI1 as well as ASDURF, POLR2E and DNAAF10/WDR92.

It is found in the cytoplasm. This Homo sapiens (Human) protein is ASNSD1 upstream open reading frame protein.